Here is a 333-residue protein sequence, read N- to C-terminus: Adenosine deaminase (333 aa).

Zn(2+) is bound by residues H12 and H14. Substrate-binding residues include H14, D16, and G170. H197 serves as a coordination point for Zn(2+). Catalysis depends on E200, which acts as the Proton donor. Position 278 (D278) interacts with Zn(2+). A substrate-binding site is contributed by D279.

Belongs to the metallo-dependent hydrolases superfamily. Adenosine and AMP deaminases family. Adenosine deaminase subfamily. It depends on Zn(2+) as a cofactor.

The enzyme catalyses adenosine + H2O + H(+) = inosine + NH4(+). It carries out the reaction 2'-deoxyadenosine + H2O + H(+) = 2'-deoxyinosine + NH4(+). Catalyzes the hydrolytic deamination of adenosine and 2-deoxyadenosine. This chain is Adenosine deaminase, found in Klebsiella pneumoniae subsp. pneumoniae (strain ATCC 700721 / MGH 78578).